A 364-amino-acid chain; its full sequence is Chorismate synthase (364 aa).

Residues arginine 48 and arginine 54 each contribute to the NADP(+) site. Residues 125–127 (RSS), glycine 282, 297–301 (KPPAS), and arginine 323 contribute to the FMN site.

It belongs to the chorismate synthase family. Homotetramer. FMNH2 serves as cofactor.

The enzyme catalyses 5-O-(1-carboxyvinyl)-3-phosphoshikimate = chorismate + phosphate. Its pathway is metabolic intermediate biosynthesis; chorismate biosynthesis; chorismate from D-erythrose 4-phosphate and phosphoenolpyruvate: step 7/7. Functionally, catalyzes the anti-1,4-elimination of the C-3 phosphate and the C-6 proR hydrogen from 5-enolpyruvylshikimate-3-phosphate (EPSP) to yield chorismate, which is the branch point compound that serves as the starting substrate for the three terminal pathways of aromatic amino acid biosynthesis. This reaction introduces a second double bond into the aromatic ring system. This chain is Chorismate synthase, found in Chloroflexus aurantiacus (strain ATCC 29366 / DSM 635 / J-10-fl).